The primary structure comprises 401 residues: tRNA (guanine-N(7)-)-methyltransferase non-catalytic subunit wuho (401 aa).

The tract at residues 45–85 is disordered; sequence KGRPRKYFDADSDSDEEQQNGDEPGTGKNNGGGDTGKKDQD. A compositionally biased stretch (acidic residues) spans 54–64; that stretch reads ADSDSDEEQQN. WD repeat units lie at residues 86–125, 174–213, and 217–255; these read DQTN…RTLK, GHMS…NIET, and GHTE…ELAR.

It belongs to the WD repeat TRM82 family. As to quaternary structure, forms a heterodimer with the catalytic subunit.

It is found in the nucleus. It functions in the pathway tRNA modification; N(7)-methylguanine-tRNA biosynthesis. Functionally, required for the formation of N(7)-methylguanine at position 46 (m7G46) in tRNA. In the complex, it is required to stabilize and induce conformational changes of the catalytic subunit. In Culex quinquefasciatus (Southern house mosquito), this protein is tRNA (guanine-N(7)-)-methyltransferase non-catalytic subunit wuho.